Consider the following 280-residue polypeptide: 2-dehydro-3-deoxyphosphooctonate aldolase (280 aa).

The protein belongs to the KdsA family.

The protein localises to the cytoplasm. The catalysed reaction is D-arabinose 5-phosphate + phosphoenolpyruvate + H2O = 3-deoxy-alpha-D-manno-2-octulosonate-8-phosphate + phosphate. It participates in carbohydrate biosynthesis; 3-deoxy-D-manno-octulosonate biosynthesis; 3-deoxy-D-manno-octulosonate from D-ribulose 5-phosphate: step 2/3. It functions in the pathway bacterial outer membrane biogenesis; lipopolysaccharide biosynthesis. This Pseudomonas putida (strain W619) protein is 2-dehydro-3-deoxyphosphooctonate aldolase.